The following is a 558-amino-acid chain: Arginine--tRNA ligase (558 aa).

Positions 119-129 match the 'HIGH' region motif; it reads PNIAKPMSMGH.

It belongs to the class-I aminoacyl-tRNA synthetase family. As to quaternary structure, monomer.

The protein localises to the cytoplasm. The enzyme catalyses tRNA(Arg) + L-arginine + ATP = L-arginyl-tRNA(Arg) + AMP + diphosphate. The protein is Arginine--tRNA ligase of Lactobacillus johnsonii (strain CNCM I-12250 / La1 / NCC 533).